Here is a 221-residue protein sequence, read N- to C-terminus: Ras-related protein Rab-27A (221 aa).

At Ser2 the chain carries N-acetylserine. A Phosphoserine modification is found at Ser2. 16–24 contacts GTP; it reads GDSGVGKTS. Residues 38-46 carry the Effector region motif; it reads FITTVGIDF. GTP contacts are provided by residues 74–78, 133–136, and 163–165; these read DTAGQ, NKSD, and SAA. Cys123 and Cys188 are joined by a disulfide. S-geranylgeranyl cysteine attachment occurs at residues Cys219 and Cys221. Cys221 carries the cysteine methyl ester modification.

It belongs to the small GTPase superfamily. Rab family. In terms of assembly, binds SYTL1, SYTL2, SLAC2B, MYRIP, SYTL3, SYTL4, SYTL5 and MLPH. Interacts with UNC13D. Interacts with RPH3A and RPH3A. Does not interact with the BLOC-3 complex (heterodimer of HPS1 and HPS4). Interacts (GDP-bound form preferentially) with DENND10. As to expression, detected in melanocytes. Expressed abundantly in the stomach and is predominantly localized at the apical region of gastric-surface mucus cells. Also expressed in the thymus and lung.

The protein localises to the membrane. Its subcellular location is the melanosome. The protein resides in the late endosome. It localises to the lysosome. It carries out the reaction GTP + H2O = GDP + phosphate + H(+). Regulated by guanine nucleotide exchange factors (GEFs) which promote the exchange of bound GDP for free GTP, GTPase activating proteins (GAPs) which increase the GTP hydrolysis activity, and GDP dissociation inhibitors which inhibit the dissociation of the nucleotide from the GTPase. Activated by GEFs such as DENND10. Its function is as follows. Small GTPase which cycles between active GTP-bound and inactive GDP-bound states. In its active state, binds to a variety of effector proteins to regulate homeostasis of late endocytic pathway, including endosomal positioning, maturation and secretion. Plays a role in cytotoxic granule exocytosis in lymphocytes. Required for both granule maturation and granule docking and priming at the immunologic synapse. In Mus musculus (Mouse), this protein is Ras-related protein Rab-27A (Rab27a).